Here is a 230-residue protein sequence, read N- to C-terminus: Urease accessory protein UreF (230 aa).

It belongs to the UreF family. In terms of assembly, ureD, UreF and UreG form a complex that acts as a GTP-hydrolysis-dependent molecular chaperone, activating the urease apoprotein by helping to assemble the nickel containing metallocenter of UreC. The UreE protein probably delivers the nickel.

The protein resides in the cytoplasm. Functionally, required for maturation of urease via the functional incorporation of the urease nickel metallocenter. The polypeptide is Urease accessory protein UreF (Polynucleobacter asymbioticus (strain DSM 18221 / CIP 109841 / QLW-P1DMWA-1) (Polynucleobacter necessarius subsp. asymbioticus)).